The chain runs to 349 residues: ATP synthase subunit a-2 (349 aa).

The propeptide occupies 1–97; sequence MERLTRLNHF…SNYMKLMEIP (97 aa). 7 consecutive transmembrane segments (helical) span residues 118–138, 184–204, 213–233, 240–260, 280–300, 303–323, and 326–346; these read FSFT…LLLI, FFPC…QGMI, HFLI…IVGF, FFSF…LVLL, MMAG…MLCM, IFYF…TGLE, and VAIL…NDAI.

This sequence belongs to the ATPase A chain family. F-type ATPases have 2 components, CF(1) - the catalytic core - and CF(0) - the membrane proton channel. CF(1) has five subunits: alpha(3), beta(3), gamma(1), delta(1), epsilon(1). CF(0) has three main subunits: a, b and c.

It is found in the mitochondrion inner membrane. In terms of biological role, mitochondrial membrane ATP synthase (F(1)F(0) ATP synthase or Complex V) produces ATP from ADP in the presence of a proton gradient across the membrane which is generated by electron transport complexes of the respiratory chain. F-type ATPases consist of two structural domains, F(1) - containing the extramembraneous catalytic core and F(0) - containing the membrane proton channel, linked together by a central stalk and a peripheral stalk. During catalysis, ATP synthesis in the catalytic domain of F(1) is coupled via a rotary mechanism of the central stalk subunits to proton translocation. Key component of the proton channel; it may play a direct role in the translocation of protons across the membrane. This Arabidopsis thaliana (Mouse-ear cress) protein is ATP synthase subunit a-2 (ATP6-2).